The following is a 310-amino-acid chain: Methionyl-tRNA formyltransferase (310 aa).

110 to 113 contributes to the (6S)-5,6,7,8-tetrahydrofolate binding site; that stretch reads SLLP.

It belongs to the Fmt family.

The catalysed reaction is L-methionyl-tRNA(fMet) + (6R)-10-formyltetrahydrofolate = N-formyl-L-methionyl-tRNA(fMet) + (6S)-5,6,7,8-tetrahydrofolate + H(+). Functionally, attaches a formyl group to the free amino group of methionyl-tRNA(fMet). The formyl group appears to play a dual role in the initiator identity of N-formylmethionyl-tRNA by promoting its recognition by IF2 and preventing the misappropriation of this tRNA by the elongation apparatus. In Clostridium acetobutylicum (strain ATCC 824 / DSM 792 / JCM 1419 / IAM 19013 / LMG 5710 / NBRC 13948 / NRRL B-527 / VKM B-1787 / 2291 / W), this protein is Methionyl-tRNA formyltransferase.